Reading from the N-terminus, the 1179-residue chain is Serine/threonine-protein kinase pakG (1179 aa).

Residues 12–53 (SKTNEDIELIKQKLKEDRELLEKERAQFEEERKIIFESLNKV) adopt a coiled-coil conformation. The CRIB domain occupies 111 to 124 (IGTPFNVQHKVHVD). The region spanning 139-390 (FLIDCILGTG…AIELLTHPFL (252 aa)) is the Protein kinase domain. Residues 145–153 (LGTGSYGTV) and K168 contribute to the ATP site. The active-site Proton acceptor is the D257. Disordered stretches follow at residues 414-469 (KKKK…SSLD), 589-631 (IGNS…NNNN), 705-1086 (SSSS…PITL), and 1121-1179 (TEIN…SPKK). Positions 621-668 (NNNNNNNNNNNEFLINQIKKELILDFNENMKQYINQQLTNLKEEMLKE) form a coiled coil. Low complexity-rich tracts occupy residues 705 to 723 (SSSSSSSFLNSSPSSSNSS) and 743 to 761 (LPPSQQSTPVTTTTTTSSP). Pro residues predominate over residues 762–776 (SPSPSPSPSPSPSSP). 2 stretches are compositionally biased toward low complexity: residues 777–788 (LPSSSTSTVNTP) and 812–833 (NNNNTNNNNNNNNSNNNNNNNN). Residues 834 to 857 (VIQSPKLNNRPLSPTTPTKQFNNR) show a composition bias toward polar residues. Residues 864 to 891 (FNNRPPSPSKFNNRPPSPSNRPLSPKNS) are compositionally biased toward low complexity. Polar residues predominate over residues 892-946 (YNSLEKSNNGSISNNRPLSPKNSLEKSTTQNNTSSEDISTTTVTVTSEQGGTPIT). The span at 954–963 (RPKPSPPPIP) shows a compositional bias: pro residues. Composition is skewed to low complexity over residues 964–997 (MNKSSPKRAPSPSSNRRLSSSFTAQSSTASTIAA), 1024–1046 (TTITSSTNSPIKPLSPLNKSPNS), and 1053–1077 (ITTSNISNNSNINNNNNNNSNSSSN). Residues 1121 to 1135 (TEINLPSSSPSTPQK) show a composition bias toward polar residues. The segment covering 1137–1158 (NTPSSIPTTPTTPTTNGGSVSS) has biased composition (low complexity).

This sequence belongs to the protein kinase superfamily. STE Ser/Thr protein kinase family. STE20 subfamily. It depends on Mg(2+) as a cofactor.

It catalyses the reaction L-seryl-[protein] + ATP = O-phospho-L-seryl-[protein] + ADP + H(+). The catalysed reaction is L-threonyl-[protein] + ATP = O-phospho-L-threonyl-[protein] + ADP + H(+). The protein is Serine/threonine-protein kinase pakG of Dictyostelium discoideum (Social amoeba).